The primary structure comprises 185 residues: ATP synthase subunit b, chloroplastic (185 aa).

A helical transmembrane segment spans residues 27–49 (LATNPINLSVVLGVLIFFGKGVL).

Belongs to the ATPase B chain family. As to quaternary structure, F-type ATPases have 2 components, F(1) - the catalytic core - and F(0) - the membrane proton channel. F(1) has five subunits: alpha(3), beta(3), gamma(1), delta(1), epsilon(1). F(0) has four main subunits: a(1), b(1), b'(1) and c(10-14). The alpha and beta chains form an alternating ring which encloses part of the gamma chain. F(1) is attached to F(0) by a central stalk formed by the gamma and epsilon chains, while a peripheral stalk is formed by the delta, b and b' chains.

It is found in the plastid. The protein resides in the chloroplast thylakoid membrane. Functionally, f(1)F(0) ATP synthase produces ATP from ADP in the presence of a proton or sodium gradient. F-type ATPases consist of two structural domains, F(1) containing the extramembraneous catalytic core and F(0) containing the membrane proton channel, linked together by a central stalk and a peripheral stalk. During catalysis, ATP synthesis in the catalytic domain of F(1) is coupled via a rotary mechanism of the central stalk subunits to proton translocation. In terms of biological role, component of the F(0) channel, it forms part of the peripheral stalk, linking F(1) to F(0). This Vitis vinifera (Grape) protein is ATP synthase subunit b, chloroplastic.